Reading from the N-terminus, the 49-residue chain is Large ribosomal subunit protein bL33B (49 aa).

It belongs to the bacterial ribosomal protein bL33 family.

This Geobacillus thermodenitrificans (strain NG80-2) protein is Large ribosomal subunit protein bL33B.